Here is a 134-residue protein sequence, read N- to C-terminus: Cytochrome b (134 aa).

3 helical membrane passes run 33–53, 77–98, and 113–133; these read FGSL…FLAM, WLIR…FLHV, and WNMG…GYVL. Heme b is bound by residues H83 and H97.

This sequence belongs to the cytochrome b family. As to quaternary structure, the cytochrome bc1 complex contains 11 subunits: 3 respiratory subunits (MT-CYB, CYC1 and UQCRFS1), 2 core proteins (UQCRC1 and UQCRC2) and 6 low-molecular weight proteins (UQCRH/QCR6, UQCRB/QCR7, UQCRQ/QCR8, UQCR10/QCR9, UQCR11/QCR10 and a cleavage product of UQCRFS1). This cytochrome bc1 complex then forms a dimer. Heme b is required as a cofactor.

The protein localises to the mitochondrion inner membrane. Component of the ubiquinol-cytochrome c reductase complex (complex III or cytochrome b-c1 complex) that is part of the mitochondrial respiratory chain. The b-c1 complex mediates electron transfer from ubiquinol to cytochrome c. Contributes to the generation of a proton gradient across the mitochondrial membrane that is then used for ATP synthesis. This chain is Cytochrome b (MT-CYB), found in Microtus subterraneus (European pine vole).